We begin with the raw amino-acid sequence, 565 residues long: Proline--tRNA ligase (565 aa).

The protein belongs to the class-II aminoacyl-tRNA synthetase family. ProS type 1 subfamily. Homodimer.

It is found in the cytoplasm. The catalysed reaction is tRNA(Pro) + L-proline + ATP = L-prolyl-tRNA(Pro) + AMP + diphosphate. In terms of biological role, catalyzes the attachment of proline to tRNA(Pro) in a two-step reaction: proline is first activated by ATP to form Pro-AMP and then transferred to the acceptor end of tRNA(Pro). As ProRS can inadvertently accommodate and process non-cognate amino acids such as alanine and cysteine, to avoid such errors it has two additional distinct editing activities against alanine. One activity is designated as 'pretransfer' editing and involves the tRNA(Pro)-independent hydrolysis of activated Ala-AMP. The other activity is designated 'posttransfer' editing and involves deacylation of mischarged Ala-tRNA(Pro). The misacylated Cys-tRNA(Pro) is not edited by ProRS. This Lactobacillus acidophilus (strain ATCC 700396 / NCK56 / N2 / NCFM) protein is Proline--tRNA ligase.